A 584-amino-acid polypeptide reads, in one-letter code: Leucine-rich repeat and fibronectin type III domain-containing protein 1 (584 aa).

Residues 1–17 (MERLVFCVLVFGALAKA) form the signal peptide. Residues 18-51 (QLCPGRCICQTISPTLTLLCAKTGLLFVPPTVDR) enclose the LRRNT domain. Topologically, residues 18-494 (QLCPGRCICQ…VPSQFLGGTM (477 aa)) are extracellular. 7 LRR repeats span residues 52–73 (KTVE…DFLN), 76–97 (SLVH…AFMG), 100–121 (SLRA…QLKG), 124–145 (NLRH…SFDE), 149–170 (TIED…AIAR), 173–194 (NINT…TFTL), and 197–218 (KLVR…TLFQ). Residue Asn73 is glycosylated (N-linked (GlcNAc...) asparagine). Residues 241 to 287 (NPLHCNCELLWLRRLTREDDLETCASPEHLMDKYFWSIQEEEFICEP) form the LRRCT domain. The 88-residue stretch at 288-375 (PLITKHQVTK…GIATAAVHVH (88 aa)) folds into the Ig-like domain. Cys310 and Cys359 form a disulfide bridge. Asn332, Asn341, Asn384, Asn408, and Asn421 each carry an N-linked (GlcNAc...) asparagine glycan. A disordered region spans residues 393–414 (DPGLSDISTSSRSSSNDSKTHS). Positions 397-409 (SDISTSSRSSSND) are enriched in low complexity. A helical transmembrane segment spans residues 495 to 515 (IIIIGGIIVASVLVFIIILMI). The Cytoplasmic segment spans residues 516-584 (RYKAYSGGGG…MVLPILHLLF (69 aa)). A disordered region spans residues 539 to 564 (HVHSQTNGSRSAATKQSEEPPESPAG). Positions 540 to 553 (VHSQTNGSRSAATK) are enriched in polar residues.

Belongs to the LRFN family.

The protein resides in the membrane. It localises to the synapse. Its function is as follows. Involved in the regulation of excitatory synapses. In Danio rerio (Zebrafish), this protein is Leucine-rich repeat and fibronectin type III domain-containing protein 1 (lrfn1).